Here is a 398-residue protein sequence, read N- to C-terminus: Phosphopentomutase (398 aa).

Mn(2+) contacts are provided by aspartate 13, aspartate 290, histidine 295, aspartate 331, histidine 332, and histidine 343.

Belongs to the phosphopentomutase family. The cofactor is Mn(2+).

The protein resides in the cytoplasm. It catalyses the reaction 2-deoxy-alpha-D-ribose 1-phosphate = 2-deoxy-D-ribose 5-phosphate. The enzyme catalyses alpha-D-ribose 1-phosphate = D-ribose 5-phosphate. The protein operates within carbohydrate degradation; 2-deoxy-D-ribose 1-phosphate degradation; D-glyceraldehyde 3-phosphate and acetaldehyde from 2-deoxy-alpha-D-ribose 1-phosphate: step 1/2. Functionally, isomerase that catalyzes the conversion of deoxy-ribose 1-phosphate (dRib-1-P) and ribose 1-phosphate (Rib-1-P) to deoxy-ribose 5-phosphate (dRib-5-P) and ribose 5-phosphate (Rib-5-P), respectively. This chain is Phosphopentomutase, found in Clostridium tetani (strain Massachusetts / E88).